The chain runs to 213 residues: Putative thymidylate kinase 251L (213 aa).

Residue 21–28 (GCDKTGKS) coordinates ATP.

This sequence belongs to the thymidylate kinase family.

It carries out the reaction dTMP + ATP = dTDP + ADP. It functions in the pathway pyrimidine metabolism; dTTP biosynthesis. Catalyzes the conversion of dTMP to dTDP. This chain is Putative thymidylate kinase 251L, found in Acheta domesticus (House cricket).